The chain runs to 919 residues: Calcium-transporting ATPase type 2C member 1 (919 aa).

The Cytoplasmic segment spans residues 1–70; that stretch reads MKVARFQKIP…NEFDISEDEP (70 aa). Residues 71 to 91 form a helical membrane-spanning segment; that stretch reads LWKKYISQFKNPLIMLLLASA. Residues 92-104 are Lumenal-facing; the sequence is VISVLMHQFDDAV. The chain crosses the membrane as a helical span at residues 105–123; that stretch reads SITVAILIVVTVAFVQEYR. The Cytoplasmic portion of the chain corresponds to 124–262; it reads SEKSLEELSK…APKTPLQKSM (139 aa). The helical transmembrane segment at 263–282 threads the bilayer; that stretch reads DLLGKQLSFYSFGIIGIIML. Topologically, residues 283–294 are lumenal; it reads VGWLLGKDILEM. A helical transmembrane segment spans residues 295 to 312; sequence FTISVSLAVAAIPEGLPI. Residues Val303, Ala304, Ile306, and Glu308 each contribute to the Ca(2+) site. Over 313-699 the chain is Cytoplasmic; sequence VVTVTLALGV…EEGKGIYNNI (387 aa). The 4-aspartylphosphate intermediate role is filled by Asp350. Asp644 and Asp648 together coordinate Mg(2+). Residues 700 to 719 form a helical membrane-spanning segment; that stretch reads KNFVRFQLSTSIAALTLISL. The Lumenal segment spans residues 720 to 729; the sequence is ATLMNFPNPL. The chain crosses the membrane as a helical span at residues 730–750; sequence NAMQILWINIIMDGPPAQSLG. The Ca(2+) site is built by Asn738 and Asp742. The Cytoplasmic segment spans residues 751–770; it reads VEPVDKDVIRKPPRNWKDSI. A helical membrane pass occupies residues 771–793; it reads LTKNLILKILVSSIIIVCGTLFV. Over 794–808 the chain is Lumenal; sequence FWRELRDNVITPRDT. The chain crosses the membrane as a helical span at residues 809–828; the sequence is TMTFTCFVFFDMFNALSSRS. Residues 829-841 lie on the Cytoplasmic side of the membrane; that stretch reads QTKSVFEIGLCSN. Residues 842–860 traverse the membrane as a helical segment; sequence RMFCYAVLGSIMGQLLVIY. The Lumenal portion of the chain corresponds to 861 to 875; it reads FPPLQKVFQTESLSI. A helical transmembrane segment spans residues 876-896; that stretch reads LDLLFLLGLTSSVCIVAEIIK. The Cytoplasmic segment spans residues 897–919; it reads KVERSREKIQKHVSSTSSSFLEV.

This sequence belongs to the cation transport ATPase (P-type) (TC 3.A.3) family. Type IIA subfamily. In terms of assembly, monomer. Homodimer. As to expression, found in most tissues except colon, thymus, spleen and leukocytes. Expressed in keratinocytes (at protein level).

It localises to the golgi apparatus. The protein resides in the trans-Golgi network membrane. The protein localises to the golgi stack membrane. It carries out the reaction Ca(2+)(in) + ATP + H2O = Ca(2+)(out) + ADP + phosphate + H(+). The enzyme catalyses Mn(2+)(in) + ATP + H2O = Mn(2+)(out) + ADP + phosphate + H(+). Functionally, ATP-driven pump that supplies the Golgi apparatus with Ca(2+) and Mn(2+) ions, both essential cofactors for processing and trafficking of newly synthesized proteins in the secretory pathway. Within a catalytic cycle, acquires Ca(2+) or Mn(2+) ions on the cytoplasmic side of the membrane and delivers them to the lumenal side. The transfer of ions across the membrane is coupled to ATP hydrolysis and is associated with a transient phosphorylation that shifts the pump conformation from inward-facing to outward-facing state. Plays a primary role in the maintenance of Ca(2+) homeostasis in the trans-Golgi compartment with a functional impact on Golgi and post-Golgi protein sorting as well as a structural impact on cisternae morphology. Responsible for loading the Golgi stores with Ca(2+) ions in keratinocytes, contributing to keratinocyte differentiation and epidermis integrity. Participates in Ca(2+) and Mn(2+) ions uptake into the Golgi store of hippocampal neurons and regulates protein trafficking required for neural polarity. May also play a role in the maintenance of Ca(2+) and Mn(2+) homeostasis and signaling in the cytosol while preventing cytotoxicity. The chain is Calcium-transporting ATPase type 2C member 1 from Homo sapiens (Human).